The primary structure comprises 367 residues: Mitogen-activated protein kinase 12 (367 aa).

Positions 27–311 constitute a Protein kinase domain; it reads YQDLQPVGSG…AAEALTHPYF (285 aa). ATP contacts are provided by residues 33-41 and lysine 56; that span reads VGSGAYGAV. Residue aspartate 153 is the Proton acceptor of the active site. A Phosphothreonine modification is found at threonine 183. The TXY motif lies at 183–185; it reads TGY. Tyrosine 185 carries the phosphotyrosine modification.

It belongs to the protein kinase superfamily. CMGC Ser/Thr protein kinase family. MAP kinase subfamily. As to quaternary structure, monomer. Interacts with the PDZ domain of the syntrophin SNTA1. Interacts with SH3BP5, LIN7C, SCRIB and SYNJ2BP. Interacts with PTPN4; this interaction induces the activation of PTPN4 phosphatase activity. It depends on Mg(2+) as a cofactor. Post-translationally, dually phosphorylated on Thr-183 and Tyr-185 by MAP2K3/MKK3 and MAP2K6/MKK6, which activates the enzyme. In terms of processing, ubiquitinated. Ubiquitination leads to degradation by the proteasome pathway. Highly expressed in skeletal muscle. Also expressed in the heart, particularly in cardiac myocytes, lung, thymus and testes.

It is found in the cytoplasm. The protein resides in the nucleus. Its subcellular location is the mitochondrion. The catalysed reaction is L-seryl-[protein] + ATP = O-phospho-L-seryl-[protein] + ADP + H(+). The enzyme catalyses L-threonyl-[protein] + ATP = O-phospho-L-threonyl-[protein] + ADP + H(+). Its activity is regulated as follows. Activated by phosphorylation on threonine and tyrosine. MAP2K3/MKK3 and MAP2K6/MKK6 are both essential for the activation of MAPK12 induced by environmental stress, whereas MAP2K6/MKK6 is the major MAPK12 activator in response to TNF-alpha. Its function is as follows. Serine/threonine kinase which acts as an essential component of the MAP kinase signal transduction pathway. MAPK12 is one of the four p38 MAPKs which play an important role in the cascades of cellular responses evoked by extracellular stimuli such as pro-inflammatory cytokines or physical stress leading to direct activation of transcription factors such as ELK1 and ATF2. Accordingly, p38 MAPKs phosphorylate a broad range of proteins and it has been estimated that they may have approximately 200 to 300 substrates each. Some of the targets are downstream kinases such as MAPKAPK2, which are activated through phosphorylation and further phosphorylate additional targets. Plays a role in myoblast differentiation and also in the down-regulation of cyclin D1 in response to hypoxia in adrenal cells suggesting MAPK12 may inhibit cell proliferation while promoting differentiation. Phosphorylates DLG1. Following osmotic shock, MAPK12 in the cell nucleus increases its association with nuclear DLG1, thereby causing dissociation of DLG1-SFPQ complexes. This function is independent of its catalytic activity and could affect mRNA processing and/or gene transcription to aid cell adaptation to osmolarity changes in the environment. Regulates UV-induced checkpoint signaling and repair of UV-induced DNA damage and G2 arrest after gamma-radiation exposure. MAPK12 is involved in the regulation of SLC2A1 expression and basal glucose uptake in L6 myotubes; and negatively regulates SLC2A4 expression and contraction-mediated glucose uptake in adult skeletal muscle. C-Jun (JUN) phosphorylation is stimulated by MAPK14 and inhibited by MAPK12, leading to a distinct AP-1 regulation. MAPK12 is required for the normal kinetochore localization of PLK1, prevents chromosomal instability and supports mitotic cell viability. MAPK12-signaling is also positively regulating the expansion of transient amplifying myogenic precursor cells during muscle growth and regeneration. The chain is Mitogen-activated protein kinase 12 (Mapk12) from Mus musculus (Mouse).